Here is a 110-residue protein sequence, read N- to C-terminus: U32-theraphotoxin-Cg1a (110 aa).

Positions 1–19 (MKHCFLILFTLIVFTVVWS) are cleaved as a signal peptide. Residues 20-43 (LEENEEYPDEDEMIESFMDGYSYR) constitute a propeptide that is removed on maturation. Intrachain disulfides connect Cys49-Cys63, Cys56-Cys69, Cys60-Cys105, and Cys62-Cys80.

Belongs to the neurotoxin 03 (Tx2) family. 02 subfamily. In terms of tissue distribution, expressed by the venom gland.

It is found in the secreted. Functionally, probable ion channel inhibitor. The chain is U32-theraphotoxin-Cg1a from Chilobrachys guangxiensis (Chinese earth tiger tarantula).